A 237-amino-acid polypeptide reads, in one-letter code: Proteasome subunit alpha type-5-B (237 aa).

Met-1 carries the post-translational modification N-acetylmethionine. Glycyl lysine isopeptide (Lys-Gly) (interchain with G-Cter in ubiquitin) cross-links involve residues Lys-43, Lys-66, and Lys-185.

It belongs to the peptidase T1A family. In terms of assembly, component of the 20S core complex of the 26S proteasome. The 26S proteasome is composed of a core protease (CP), known as the 20S proteasome, capped at one or both ends by the 19S regulatory particle (RP/PA700). The 20S proteasome core is composed of 28 subunits that are arranged in four stacked rings, resulting in a barrel-shaped structure. The two end rings are each formed by seven alpha subunits, and the two central rings are each formed by seven beta subunits. The catalytic chamber with the active sites is on the inside of the barrel.

It is found in the cytoplasm. It localises to the nucleus. In terms of biological role, the proteasome is a multicatalytic proteinase complex which is characterized by its ability to cleave peptides with Arg, Phe, Tyr, Leu, and Glu adjacent to the leaving group at neutral or slightly basic pH. The proteasome has an ATP-dependent proteolytic activity. In Arabidopsis thaliana (Mouse-ear cress), this protein is Proteasome subunit alpha type-5-B (PAE2).